We begin with the raw amino-acid sequence, 838 residues long: Calmodulin-binding transcription activator 6 (838 aa).

Positions 25–134 (VQTMLEEAKS…YRDTQEAATT (110 aa)) form a DNA-binding region, CG-1. An ANK repeat occupies 525-554 (QGWTALHWAAYYGREKMVAALLSAGARPNL). IQ domains follow at residues 671 to 700 (SIIAAMKIQNAFRKYDTRRKIEAAYRIQCR), 713 to 742 (MRRQAIRIQAAFRGLQARRQYKKILWSVGV), and 788 to 817 (LERSVVRVQAMFRSKKAQQDYRRMKLTHEE). The calmodulin-binding stretch occupies residues 738–760 (WSVGVLEKAVLRWRQKRKGFRGL). Residues 802 to 822 (KKAQQDYRRMKLTHEEAQVNH) are a coiled coil.

Belongs to the CAMTA family. Expressed in roots, stems, leaves, sepals, petals, stamen filaments, top of carpels, anthers and siliques, but not in stigmas.

It is found in the nucleus. Transcription activator that binds calmodulin in a calcium-dependent manner in vitro. Binds to the DNA consensus sequence 5'-[ACG]CGCG[GTC]-3'. Regulates transcriptional activity in response to calcium signals. The sequence is that of Calmodulin-binding transcription activator 6 from Arabidopsis thaliana (Mouse-ear cress).